A 512-amino-acid polypeptide reads, in one-letter code: ATP synthase subunit alpha (512 aa).

Residue 169–176 (GDRQTGKT) participates in ATP binding.

Belongs to the ATPase alpha/beta chains family. As to quaternary structure, F-type ATPases have 2 components, CF(1) - the catalytic core - and CF(0) - the membrane proton channel. CF(1) has five subunits: alpha(3), beta(3), gamma(1), delta(1), epsilon(1). CF(0) has four main subunits: a(1), b(1), b'(1) and c(9-12).

The protein resides in the cell inner membrane. The catalysed reaction is ATP + H2O + 4 H(+)(in) = ADP + phosphate + 5 H(+)(out). Its function is as follows. Produces ATP from ADP in the presence of a proton gradient across the membrane. The alpha chain is a regulatory subunit. This chain is ATP synthase subunit alpha, found in Roseobacter denitrificans (strain ATCC 33942 / OCh 114) (Erythrobacter sp. (strain OCh 114)).